Consider the following 287-residue polypeptide: uncharacterized protein (287 aa).

A run of 10 helical transmembrane segments spans residues 7–28 (LLLT…RAAL), 32–54 (AIDA…AVLL), 67–86 (GWRG…YAYV), 91–113 (GTGA…LLRG), 120–139 (ALLG…LPGA), 144–163 (LGGA…YTLL), 170–192 (PLAV…LLAF), 202–224 (GLAY…WYSA), 231–253 (IQGA…LLLG), and 263–280 (ATLA…PRLG). 2 EamA domains span residues 15-136 (LAFA…FLLL) and 155-276 (LAWG…LILA).

The protein localises to the cell membrane. This is an uncharacterized protein from Pseudomonas aeruginosa (strain ATCC 15692 / DSM 22644 / CIP 104116 / JCM 14847 / LMG 12228 / 1C / PRS 101 / PAO1).